We begin with the raw amino-acid sequence, 160 residues long: Transcription elongation factor GreA (160 aa).

Residues 1–31 (MAEKTYPMTLEEKEKLEKELEELKLVRRPEI) adopt a coiled-coil conformation.

The protein belongs to the GreA/GreB family.

In terms of biological role, necessary for efficient RNA polymerase transcription elongation past template-encoded arresting sites. The arresting sites in DNA have the property of trapping a certain fraction of elongating RNA polymerases that pass through, resulting in locked ternary complexes. Cleavage of the nascent transcript by cleavage factors such as GreA or GreB allows the resumption of elongation from the new 3'terminus. GreA releases sequences of 2 to 3 nucleotides. The sequence is that of Transcription elongation factor GreA from Streptococcus suis (strain 98HAH33).